The primary structure comprises 1386 residues: Roundabout homolog 3 (1386 aa).

The signal sequence occupies residues 1-20; that stretch reads MLRYLLKTLLQMNLFADSLA. Residues 21-891 lie on the Extracellular side of the membrane; the sequence is GDISNSSELL…VRLARVLREP (871 aa). N-linked (GlcNAc...) asparagine glycosylation is found at asparagine 25, asparagine 34, asparagine 41, and asparagine 53. Ig-like C2-type domains are found at residues 64-160, 166-253, 258-342, 347-440, and 450-531; these read PRIV…ASLE, DDFR…AEVM, PSFL…GSLS, PQLV…ALLE, and PPVI…GEAT. Residues cysteine 85 and cysteine 143 are joined by a disulfide bond. Asparagine 156 carries an N-linked (GlcNAc...) asparagine glycan. Intrachain disulfides connect cysteine 187–cysteine 236, cysteine 279–cysteine 326, and cysteine 368–cysteine 424. N-linked (GlcNAc...) asparagine glycans are attached at residues asparagine 410, asparagine 459, and asparagine 503. Cysteine 472 and cysteine 521 are joined by a disulfide. Disordered regions lie at residues 541 to 563 and 639 to 662; these read DWGVSPDPPTEPSSPPGAPSQPV and EPSPVSEPVRTQDSSPSRPVEDPW. The span at 546–559 shows a compositional bias: pro residues; it reads PDPPTEPSSPPGAP. 3 consecutive Fibronectin type-III domains span residues 558 to 652, 671 to 766, and 771 to 869; these read APSQ…TQDS, VAVR…IPEE, and PPQG…SPPD. Residues asparagine 784, asparagine 813, and asparagine 820 are each glycosylated (N-linked (GlcNAc...) asparagine). Residues 892–912 form a helical membrane-spanning segment; sequence AFLAGSGAACGALLLGLCAAL. At 913–1386 the chain is on the cytoplasmic side; sequence YWRRKQRKEL…PGQKRREEPR (474 aa). Disordered regions lie at residues 965–989, 1028–1310, and 1327–1386; these read SWPHPSRSPSAQEPRGSCCPSNPDP, ELQT…AVPL, and SRPS…EEPR. A compositionally biased stretch (low complexity) spans 1067 to 1083; that stretch reads VKLLGKPVQMPSLNWPE. The segment covering 1099 to 1112 has biased composition (acidic residues); sequence GPEEELEGSSEPEE. Pro residues predominate over residues 1158 to 1169; that stretch reads PSPPDPPQPPTD. Low complexity-rich tracts occupy residues 1178–1191 and 1202–1229; these read RRVPLGPSSPLSVS and PAGLGAGPAASPHLSPSPAPSTASSAPG. Phosphoserine is present on serine 1263. Positions 1294–1304 are enriched in basic and acidic residues; it reads LERERSGERKA. Residues 1333 to 1344 are compositionally biased toward polar residues; the sequence is SRGQGTSTCSTA. Low complexity predominate over residues 1345-1361; the sequence is GSNSSRGSSSSRGSRGP.

It belongs to the immunoglobulin superfamily. ROBO family. In terms of assembly, monomer. Interacts (via Fibronectin type-III 1 domain) with NELL2 (via the EGF domains) with a 3:3 stoichiometry; this interaction promotes oligomerization of ROBO3 resulting in the repulsion of commissural axons in the midline.

It localises to the membrane. Receptor involved in axon guidance during development. Acts as a multifunctional regulator of pathfinding that simultaneously mediates NELL2 repulsion, inhibits SLIT repulsion, and facilitates Netrin-1/NTN1 attraction. In spinal cord development plays a role in guiding commissural axons probably by preventing premature sensitivity to Slit proteins thus inhibiting Slit signaling through ROBO1/ROBO2. Binding OF NELL2 to the receptor ROBO3 promotes oligomerization of ROBO3, resulting in the repulsion of commissural axons in the midline. ROBO3 also indirectly boosts axon attraction to NTN1 without interacting with NTN1 itself. This is Roundabout homolog 3 from Homo sapiens (Human).